A 374-amino-acid polypeptide reads, in one-letter code: Guanine nucleotide-binding protein subunit alpha-15 (374 aa).

Residues 41–374 (GELKLLLLGT…ARYLDEINLL (334 aa)) enclose the G-alpha domain. A G1 motif region spans residues 44-57 (KLLLLGTGESGKST). GTP-binding positions include 49 to 56 (GTGESGKS), 183 to 189 (LRSRMPT), 208 to 212 (DVGGQ), 277 to 280 (NKTD), and A346. Residues S56 and T189 each coordinate Mg(2+). The G2 motif stretch occupies residues 181-189 (DVLRSRMPT). The G3 motif stretch occupies residues 204–213 (LRIVDVGGQK). The interval 273-280 (ILFLNKTD) is G4 motif. The G5 motif stretch occupies residues 344-349 (TCATDT).

Belongs to the G-alpha family. G(q) subfamily. As to quaternary structure, g proteins are composed of 3 units; alpha, beta and gamma. The alpha chain contains the guanine nucleotide binding site.

Guanine nucleotide-binding proteins (G proteins) are involved as modulators or transducers in various transmembrane signaling systems. The polypeptide is Guanine nucleotide-binding protein subunit alpha-15 (GNA15) (Oryctolagus cuniculus (Rabbit)).